A 165-amino-acid polypeptide reads, in one-letter code: 2S seed storage protein 5 (165 aa).

The N-terminal stretch at 1–20 is a signal peptide; the sequence is MAKLILVFATLALFILLANA. Propeptides lie at residues 21-37 and 71-89; these read SIYRTVVEFEEDDDVSN and YEADDFELTLDVDLEDDEN.

The protein belongs to the 2S seed storage albumins family. As to quaternary structure, the mature protein consists of a small and a large chain linked by disulfide bonds.

This is a 2S seed storage protein. The protein is 2S seed storage protein 5 (SESA5) of Arabidopsis thaliana (Mouse-ear cress).